The sequence spans 371 residues: Protein IQ-DOMAIN 7 (371 aa).

Positions 1–32 (MGGSGNWIRSLISNRKPVNDQQEKLSDKSSKK) are disordered. Basic and acidic residues predominate over residues 17 to 29 (PVNDQQEKLSDKS). IQ domains follow at residues 93–121 (REWA…AVVR) and 122–144 (IQAI…CMQA). A calmodulin-binding region spans residues 125-141 (IFRGRQVRKQAAVTLRC). Disordered stretches follow at residues 285–308 (SGMS…PVAF) and 327–371 (LTQS…SQRS). Composition is skewed to polar residues over residues 297–308 (STSSTSQSPVAF) and 327–341 (LTQS…SGLS).

This sequence belongs to the IQD family. As to quaternary structure, binds to multiple calmodulin (CaM) in the presence of Ca(2+) and CaM-like proteins.

The protein resides in the nucleus. Its subcellular location is the nucleus envelope. It localises to the cytoplasm. The protein localises to the cytoskeleton. Functionally, may be involved in cooperative interactions with calmodulins or calmodulin-like proteins. Recruits calmodulin proteins to microtubules, thus being a potential scaffold in cellular signaling and trafficking. May associate with nucleic acids and regulate gene expression at the transcriptional or post-transcriptional level. This Arabidopsis thaliana (Mouse-ear cress) protein is Protein IQ-DOMAIN 7.